The following is a 400-amino-acid chain: MTQFASPVLHSLLDTDAYKLHMQQAVFHHYYDVHVAAEFRCRGDDLLGIYADAIREQVNAMQHLQLQEDEFQWLSGLPFFKADYLNWLRDFRYNPEQVCVTNDNGKLNIRLTGPWREVIMWEVPLLAVISELVHRYRSPEMGVAQALDALESKLVDFSALTADLNMSRFHLMDFGTRRRFSREVQQAIVKRLQQEPWFVGTSNYDLARRLSLTPMGTQAHEWFQAHQQISPDLATSQRAALAAWLNEYPNQLGIALTDCITMDAFLRDFGTEFATRYQGLRHDSGDPVEWGEKAIAHYQKLGIDPLSKTLVFSDNLDLKKAVDLYRHFSSRVQLSFGIGTRLTCDIPQVKPLNIVIKLVECNGKPVAKLSDSPGKTICHDKAFVRALRKAFDLPHIKKAS.

Histidine 220 carries the phosphohistidine; by autocatalysis modification.

The protein belongs to the NAPRTase family. Transiently phosphorylated on a His residue during the reaction cycle. Phosphorylation strongly increases the affinity for substrates and increases the rate of nicotinate D-ribonucleotide production. Dephosphorylation regenerates the low-affinity form of the enzyme, leading to product release.

It carries out the reaction nicotinate + 5-phospho-alpha-D-ribose 1-diphosphate + ATP + H2O = nicotinate beta-D-ribonucleotide + ADP + phosphate + diphosphate. Its pathway is cofactor biosynthesis; NAD(+) biosynthesis; nicotinate D-ribonucleotide from nicotinate: step 1/1. In terms of biological role, catalyzes the synthesis of beta-nicotinate D-ribonucleotide from nicotinate and 5-phospho-D-ribose 1-phosphate at the expense of ATP. The sequence is that of Nicotinate phosphoribosyltransferase from Citrobacter koseri (strain ATCC BAA-895 / CDC 4225-83 / SGSC4696).